A 316-amino-acid chain; its full sequence is protein SLOW GREEN 1, chloroplastic (316 aa).

The transit peptide at 1-39 (MISSLSASSSLVSSFVAVKATPVTGPLIPRRDLLSIRIR) directs the protein to the chloroplast. TPR repeat units follow at residues 118–151 (VETL…QPEE), 152–185 (TEWK…NPLS), 226–259 (RDVR…DPKD), and 261–293 (RPYF…SPKK).

As to expression, ubiquitous. Preferentially expressed in newly formed green tissues.

The protein resides in the plastid. The protein localises to the chloroplast. Required for the early stage of chloroplast development. May be involved in chloroplast protein biosynthesis and/or degradation. In Arabidopsis thaliana (Mouse-ear cress), this protein is protein SLOW GREEN 1, chloroplastic.